A 234-amino-acid chain; its full sequence is 2,3-bisphosphoglycerate-dependent phosphoglycerate mutase (234 aa).

Substrate contacts are provided by residues 8–15 (RHGESVWN), 21–22 (TG), Arg60, 87–90 (ERHY), Lys98, 114–115 (RR), and 183–184 (GN). Catalysis depends on His9, which acts as the Tele-phosphohistidine intermediate. The active-site Proton donor/acceptor is Glu87.

This sequence belongs to the phosphoglycerate mutase family. BPG-dependent PGAM subfamily. As to quaternary structure, homodimer.

The enzyme catalyses (2R)-2-phosphoglycerate = (2R)-3-phosphoglycerate. It participates in carbohydrate degradation; glycolysis; pyruvate from D-glyceraldehyde 3-phosphate: step 3/5. Its function is as follows. Catalyzes the interconversion of 2-phosphoglycerate and 3-phosphoglycerate. The sequence is that of 2,3-bisphosphoglycerate-dependent phosphoglycerate mutase from Geobacter sp. (strain M21).